Reading from the N-terminus, the 344-residue chain is Cyclin-G2 (344 aa).

Residues E301–C313 are compositionally biased toward acidic residues. Residues E301–S320 form a disordered region.

The protein belongs to the cyclin family. Cyclin G subfamily. In terms of tissue distribution, high levels in cerebellum, thymus, spleen and prostate. Low levels in skeletal muscle.

Its subcellular location is the cytoplasm. May play a role in growth regulation and in negative regulation of cell cycle progression. This is Cyclin-G2 (CCNG2) from Homo sapiens (Human).